The primary structure comprises 777 residues: Glucocorticoid receptor (777 aa).

Over residues 1–14 (MDSKESLTPGKEEN) the composition is skewed to basic and acidic residues. Residues 1–22 (MDSKESLTPGKEENPSSVLTQE) are disordered. The segment at 1-420 (MDSKESLTPG…TATTGPPPKL (420 aa)) is modulating. At Thr-8 the chain carries Phosphothreonine. Position 23 is an omega-N-methylarginine (Arg-23). Phosphoserine occurs at positions 45, 113, 134, and 141. Positions 130–182 (NRSTSVPENPKSSASSSVSAAPKEKEFPKTHSDVSSEQQNLKGQTGSNGGNVK) are disordered. A compositionally biased stretch (low complexity) spans 134 to 150 (SVPENPKSSASSSVSAA). Positions 151–163 (PKEKEFPKTHSDV) are enriched in basic and acidic residues. The span at 164 to 174 (SSEQQNLKGQT) shows a compositional bias: polar residues. Residues Ser-203, Ser-211, and Ser-226 each carry the phosphoserine modification. Lys-258 is covalently cross-linked (Glycyl lysine isopeptide (Lys-Gly) (interchain with G-Cter in SUMO2)). Phosphoserine is present on Ser-267. Residues Lys-277 and Lys-293 each participate in a glycyl lysine isopeptide (Lys-Gly) (interchain with G-Cter in SUMO); alternate cross-link. Glycyl lysine isopeptide (Lys-Gly) (interchain with G-Cter in SUMO2); alternate cross-links involve residues Lys-277 and Lys-293. A compositionally biased stretch (low complexity) spans 394–414 (SSPSMRPDVSSPPSSSSTATT). A disordered region spans residues 394 to 415 (SSPSMRPDVSSPPSSSSTATTG). Phosphoserine is present on Ser-404. A Glycyl lysine isopeptide (Lys-Gly) (interchain with G-Cter in ubiquitin) cross-link involves residue Lys-419. 2 consecutive NR C4-type zinc fingers follow at residues 421 to 441 (CLVC…CGSC) and 457 to 481 (CAGR…YRKC). A DNA-binding region (nuclear receptor) is located at residues 421-486 (CLVCSDEASG…RYRKCLQAGM (66 aa)). N6-acetyllysine is present on residues Lys-480, Lys-492, Lys-494, and Lys-495. Residues 485–777 (GMNLEARKTK…NIKKLLFHQK (293 aa)) form an interaction with CLOCK region. The hinge stretch occupies residues 487 to 523 (NLEARKTKKKIKGIQQATTGVSQETSENPANKTIVPA). The NR LBD domain maps to 524-758 (TLPQLTPTLV…FPEMLAEIIT (235 aa)). Residues 532-697 (LVSLLEVIEP…EIRMTYIKEL (166 aa)) form an interaction with CRY1 region. Lys-703 participates in a covalent cross-link: Glycyl lysine isopeptide (Lys-Gly) (interchain with G-Cter in SUMO).

Belongs to the nuclear hormone receptor family. NR3 subfamily. In terms of assembly, heteromultimeric cytoplasmic complex with HSP90AA1, HSPA1A/HSPA1B, and FKBP5 or another immunophilin such as PPID, STIP1, or the immunophilin homolog PPP5C. Upon ligand binding FKBP5 dissociates from the complex and FKBP4 takes its place, thereby linking the complex to dynein and mediating transport to the nucleus, where the complex dissociates. Probably forms a complex composed of chaperones HSP90 and HSP70, co-chaperones CDC37, PPP5C, TSC1 and client protein TSC2, CDK4, AKT, RAF1 and NR3C1; this complex does not contain co-chaperones STIP1/HOP and PTGES3/p23. Directly interacts with UNC45A. Binds to DNA as a homodimer, and as heterodimer with NR3C2 or the retinoid X receptor. Binds STAT5A and STAT5B homodimers and heterodimers. Interacts with NRIP1, POU2F1, POU2F2 and TRIM28. Interacts with several coactivator complexes, including the SMARCA4 complex, CREBBP/EP300, TADA2L (Ada complex) and p160 coactivators such as NCOA2 and NCOA6. Interaction with BAG1 inhibits transactivation. Interacts with HEXIM1 and TGFB1I1. Interacts with NCOA1. Interacts with NCOA3, SMARCA4, SMARCC1, SMARCD1, and SMARCE1. Interacts with CLOCK, CRY1 and CRY2 in a ligand-dependent fashion. Interacts with CIART. Interacts with RWDD3. Interacts with UBE2I/UBC9 and this interaction is enhanced in the presence of RWDD3. Interacts with GRIP1. Interacts with NR4A3 (via nuclear receptor DNA-binding domain), represses transcription activity of NR4A3 on the POMC promoter Nur response element (NurRE). Directly interacts with PNRC2 to attract and form a complex with UPF1 and DCP1A; the interaction leads to rapid mRNA degradation. Interacts with GSK3B. Interacts with FNIP1 and FNIP2. Interacts (via C-terminus) with HNRNPU (via C-terminus). Interacts with MCM3AP. Interacts (via domain NR LBD) with HSP90AA1 and HSP90AB1. In the absence of hormonal ligand, interacts with TACC1. Interacts (via NR LBD domain) with ZNF764 (via KRAB domain); the interaction regulates transcription factor activity of NR3C1 by directing its actions toward certain biologic pathways. Post-translationally, acetylation by CLOCK reduces its binding to glucocorticoid response elements and its transcriptional activity. Increased proteasome-mediated degradation in response to glucocorticoids. In terms of processing, phosphorylated in the absence of hormone; becomes hyperphosphorylated in the presence of glucocorticoid. The Ser-203, Ser-226 and Ser-404-phosphorylated forms are mainly cytoplasmic, and the Ser-211-phosphorylated form is nuclear. Phosphorylation at Ser-211 increases transcriptional activity. Phosphorylation at Ser-203, Ser-226 and Ser-404 decreases signaling capacity. Phosphorylation at Ser-404 may protect from glucocorticoid-induced apoptosis. Phosphorylation at Ser-203 and Ser-211 is not required in regulation of chromosome segregation. May be dephosphorylated by PPP5C, attenuates NR3C1 action. Post-translationally, ubiquitinated by UBR5, leading to its degradation: UBR5 specifically recognizes and binds ligand-bound NR3C1 when it is not associated with coactivators (NCOAs). In presence of NCOAs, the UBR5-degron is not accessible, preventing its ubiquitination and degradation. Sumoylation at Lys-277 and Lys-293 negatively regulates its transcriptional activity. Sumoylation at Lys-703 positively regulates its transcriptional activity in the presence of RWDD3. Sumoylation at Lys-277 and Lys-293 is dispensable whereas sumoylation at Lys-703 is critical for the stimulatory effect of RWDD3 on its transcriptional activity. Heat shock increases sumoylation in a RWDD3-dependent manner.

Its subcellular location is the cytoplasm. It localises to the nucleus. The protein resides in the mitochondrion. The protein localises to the cytoskeleton. It is found in the spindle. Its subcellular location is the microtubule organizing center. It localises to the centrosome. The protein resides in the chromosome. The protein localises to the nucleoplasm. In terms of biological role, receptor for glucocorticoids (GC). Has a dual mode of action: as a transcription factor that binds to glucocorticoid response elements (GRE), both for nuclear and mitochondrial DNA, and as a modulator of other transcription factors. Affects inflammatory responses, cellular proliferation and differentiation in target tissues. Involved in chromatin remodeling. Plays a role in rapid mRNA degradation by binding to the 5' UTR of target mRNAs and interacting with PNRC2 in a ligand-dependent manner which recruits the RNA helicase UPF1 and the mRNA-decapping enzyme DCP1A, leading to RNA decay. Could act as a coactivator for STAT5-dependent transcription upon growth hormone (GH) stimulation and could reveal an essential role of hepatic GR in the control of body growth. Mediates glucocorticoid-induced apoptosis. Promotes accurate chromosome segregation during mitosis. May act as a tumor suppressor. May play a negative role in adipogenesis through the regulation of lipolytic and antilipogenic gene expression. The chain is Glucocorticoid receptor (NR3C1) from Saimiri boliviensis boliviensis (Bolivian squirrel monkey).